A 538-amino-acid polypeptide reads, in one-letter code: ATP-dependent rRNA helicase RRP3 (538 aa).

Over residues 1 to 11 the composition is skewed to basic residues; the sequence is MSSAKRVKLSH. The tract at residues 1–112 is disordered; it reads MSSAKRVKLS…SKEETPTKSF (112 aa). The segment covering 34–47 has biased composition (low complexity); the sequence is KKITQAPKAAAPIK. Acidic residues predominate over residues 53-85; that stretch reads AEEDDDDDDKDDKDEEDEEQNDDSSDEASENDD. Residues 92-112 are compositionally biased toward basic and acidic residues; the sequence is EATKEGQTELPSKEETPTKSF. The short motif at 110-138 is the Q motif element; that stretch reads KSFRDLGIVEPLCEACEALKFKKPTPIQE. The region spanning 141–312 is the Helicase ATP-binding domain; sequence IPLALQGRDV…RASLRDPLKV (172 aa). Position 154-161 (154-161) interacts with ATP; sequence AETGSGKT. The DEAD box signature appears at 260-263; sequence DEAD. The Helicase C-terminal domain occupies 336-486; that stretch reads HKDVYLIYLA…LFQPDKEEVM (151 aa). Residues 498-512 are compositionally biased toward basic and acidic residues; that stretch reads HAREEMKALHEDRGK. Residues 498 to 538 form a disordered region; that stretch reads HAREEMKALHEDRGKKGAVLKGRKRGSATKRRHDDMDAEEG. Over residues 513–528 the composition is skewed to basic residues; the sequence is KGAVLKGRKRGSATKR.

This sequence belongs to the DEAD box helicase family. DDX47/RRP3 subfamily. In terms of assembly, interacts with the SSU processome.

The protein localises to the nucleus. The enzyme catalyses ATP + H2O = ADP + phosphate + H(+). Functionally, ATP-dependent rRNA helicase required for pre-ribosomal RNA processing. Involved in the maturation of the 35S-pre-rRNA and to its cleavage to mature 18S rRNA. The polypeptide is ATP-dependent rRNA helicase RRP3 (Pyricularia oryzae (strain 70-15 / ATCC MYA-4617 / FGSC 8958) (Rice blast fungus)).